Here is a 4423-residue protein sequence, read N- to C-terminus: MQGGPVICNGIPSVTISILPHPRSRARTSLLLRRGGALGPGSGCMSDRLFTTPDMRKNRQRLTLAASVVLKKEENEIDLEKSLVEQGGDMLSGVFFAGQCRELGLIVDIANASSMSLRDMALQLVESNPELLRPSTAMDCRSASVPHTLLQSLYRNFGASTGVTLDVDIPLTLEDVTKMLQRLVERHPILGSTAEPNDKTSYVFSNTVPSPILVSFESDKTHAEMRMLQEDSKSKVAVFSVMAFGEESRITNLSFVADNAAIDAQSWSILLHDIQAFPAGFNDLTTQSNTFPNWIESAFRVTDTTVETAGTTKLPIHSEMSAEDSSPALSSCVFTLNPELTQAIQSEACHRTLRTEVQDVMFGALASTFGTQLPASARYLEIKDGRPQDEGNAWNSVIGCFDEIFELAYECHGDIIDACRSAKDSRKQSSLSPVHYASCRYNLILDTTWLKACIGTSSTGKMRLMDNEPGRYAAEALVKSMGGLCMTPFWQGTGLSFLVVSSTDFGSDEDLKLNSEMFINHVQHISETLPNRSPWPTLSDFPHVSFDYPSLDRMFQQKLLQITQTPLADIHNIYPCTSIQENMLMGNSLDKDAYVCSFTARATTSGAFTHFDAAKWAEAWGRVVEKHSSLRTIFIESEGRPGHFEQVILKSVAAPVDIMTGPSVPSKIEFQDFSVPHHLAIIQEGPGRCLMILTMSHAITDGHSAEVLLGDLCAEAVQTDGTGEEAFAYSEFALTEYQSTNTEVSDYWQDYLLKTQETILPVTREKSDFHDFNTVHSTMPVNVSSMDRICRRHNINLASVCQFAWGVVLRSRLGVDGVCFSYISSLRNKPLKGIMTAVGPLITTLLCSMNLEGERPVLDAIRAVDSEYVESLSHEKELYNITSPRRWCNTVMSFRRRLVQDDGGIPGLSYKLVKAFSPTNYDFSLIVSAGQSDLDIMLDYWGSRMDRDNAQSLLQIFQEVLHSIFRDIDSTVSGLDLISQDDKNRILERNRLVPKGLNRCVHELVNERIQKQPSAVAIDAWDGSLTYSELDNLTSRLAQYLSNIGVGPEVPVGICMDKSKLVPVTVLAILQAGGAVLPIGVEEPEARVEAILADATPVAIVGDGRQVTRLSELGTQVLNVVDILADMSSSLPSSTSKQETRATPDTTAWIFYTSGSTGTPKGVLVEHQALATSMRAHGVALKVLPEDRVLQFAAHTFDVSLSELFTTLIFGGCVCIPDETNRVNDLAGSVHGLQANVLSLTSSMASTIRPRDVPMVRKLVLFGEEVKASVVEAWLGKADIYNAYGPTESSIFASVSKPFQSVDDLSNIGYPMDVNFWVTDPQNPGRLCPPGSPGELLIEGPLLARGYLNDDNKTSTAFIQDPSFASLLGLEKGRRFYRTGDLVRQNSDFSMSYLGRRDTQVKIRGQRLDVSEVEHWITASLEGAVRVVVDLLPGAILFAAVEFSPHAVVVVSGDKTILQTSDEFRHRFSQLKNALQGKLPSYMLPTFYVPFRRIPLTSSAKTDRKMVRLLVSQLDTIILQQYISNDSNESDDLPLTETEQKLKVLWANVLNVTHSSIGAGDHFLYRGGDSLMAIKLVEQARLESISMTVKDVLSFPRLQDLARTIDERNEVGIISSAQMANQHDPPAFSLWKPSSSDRETELADIAMQCGLGTEDIEDVYPCTSLQESMLAATQQRPTAYIVRQMYSLSDSIDLSHFRKIWDVLVQQAPVMRTHILLGQRSGSLQVLSKKPLTWYNHDDLDEYVAADQARAMATGQPLMRLALVQDKSKGVRYFVWTAHHSVYDGWSAQLIYKRLAALYLYEEVPTAVPFTRFIEYQQRTKDDSDINLGSYWRGQLGGDVPSAFPSMPSPFYQPKPVSLHRSEIDTLSFKPSKYGFSLADILRAGWAMTLGQYLGTNDVVFGAILSGRNAPVAEITQLIAPTITTVPVRVTVDREAKVSWYLAAIQSQAVEMIPYEHTGLDEIKRLCPDLQPATDVNHAFVIEPPYAKDGDAHTILPGLELVDTALDTFDTFALTIQCQLPSKQGGSIKVEARFDAKVVSDAQVTVLLRQFEHWVSQFLDETHHETQLKSLEEITSADLAQIKKQNSRIPVRDMVCLHHLIRDVAKEQPDSPAVCAWDGDFTYEELWTNARRLAQHLSNLGVGPKSRVAVCMDKSRWTVASILGILESGGVVVMLRSQSPLEQAKALVADCQATAMLVNAGHTARFAGSGPRIVEVNDALLASLPDPTVSGPICPALNPGHPAWIVYTSGSTGLPKGCLLIHGGLATSLPAHGRATRWHKESRTLQFASHEFDVTLQEIMTTLIFKGCVCIPSEDQRINSLSQAIRDMNVTQMVLTPTVASMINPVDVPCIVQLQVAGELIKPSVVERWIDHAEVVNIYGPSECSVYSSCGTPMQTIEDAPVIGYPLDNCNFWVTSTTDHNRLCPIGIPGELLIENSWQAWGYVNNPELTAQCFVVEPGFIKQLGLDGSGRRMYRTGDLVQQNPNGSYTYIGRMGSEVKFRGHRVDLGRIEYWIGKLLEGVQTIAVDLVELDTGKKANDLVAVIDFTDDCDLFDLDQTEDIDGVAILTPSTKIRKALCRLRDGLTDKLPSYMVPTAFMPWKKIPFTSSGKTNRKAIRQLLTNLEAGSSLLQRYLADGDVKEVPQTRIGKKLQQLWAEVLSVKVDSIGSQDHFTRLGGDSLAAMKLVASARQVGLELSVTSIFTYPVLEDCARILEADQDSSLVKLPEEDPAPFELMPEDWSTGGFEDRLADFAAQCRVAPSQIEDVYPCTPMQEALFAITARNPTAYTYRQVFRASGEDVDMVRFQTAWETVASILPILRTRIVLDQSGFLQTVIDQPLIWHIGGDLDSYIAADKLVGFEPGTPLLRCAIVEGGGAKYFVLTTHHSMFDKWSIEKIMYRYLIPAYFGQQLPEAVPFPRFVRHVLNIDMDSASQFWTQKLEDDEPFTEFPSLPSVGFYEPKPTGLLSQTFRIDGVNKLETPFPSLLRAAWALTVSQYAGAEDVMFAVNLSGRSAPVADISELAAPTFTTVPVRVRINRSQRVRDFLDGLHRETIAMVPFEHVGLRNIKRFVPTFNPSDLRHLFLVHTAADDTLDDPSFRLPGFEQVHQKAETLDDYPLTILCKLDDHKGEAEVVARFDSTVIPADQIQSVLRQFEHNVVQLAASASSDDQTVGGLPLVSSYDLDRISAWNVTGPPSLGCVHDLFIRSLETRPDSQAVCSWDGEFTYRELDQAARILAQLLVAEGGVGTEVAVGLCMDKSRWAMVAVLAILYAGGAVVPLGVDLPPERISVILQDSSPTMVLCDEAKADRFRSLGCKIAVVNETEIDGVAKSYDGYNPNIPSTSVSAENMAWIIYTSGSTGVPKGVTLEHGGIYNIILNKGTTLGFDSTTRTFQFAAFTFDVSIADPLMAWAFGGCVCLPSEDERMNDLVGSINRLNANFALLTASTAALITPSEVPRMTKLLLGGESNTPSLMEKWLLDSNITVGNSYGPAECSITSTINARVTDKNGCNIIGNPIQGTQAWIADFHDCNRLVPIGAVGELLIEGPHVARGYRNDAVKTMAAFITDPRFTTDVGPKRHGRRMYRSGDLVRYTSDGNIEFLGRGDSQIKIRGQRVDLGEIESCIVKLVPKVRTALVEYLHLSEDQRALIAALEFHNADKDQDVEGLATWLKESLAQQLPAYMIPRAYLQIDMIPKTVSGKTNRKAIRQFMMNKYMQIADENSLNDFQTGKVDTESEYITRTLWAAVLGVDADRIDRHDNFFDIGGDSIIAMKLVAAAKVKGFQIRVLDIFENPVLFKMAVVAQHQTEMALEAVSPPPYYPFQLLDSDDNDIDTILEEFVCPVTGTGKESIQDVFPAPDAIAFGVAGALTAAQPEVNTFVLDAEGDLDLVRLQQSCVLLAHHIEAFRTAFAFDLRSGRLLQIVLKSYQHNVLVVRTRESLEDATERLFEKDIYHEPFRLGTPLVSMTILQEHNSRNTRILLRMSHAIYDAMSLPIILRTLRSLYHKQDAYKPPLFSFAEYVADLNRHTGNTSYNYWRNLLQGSTMTEVIPTAAYGGQNPVQMAFTNAKMIAVRKSKGDGITTSTIISCAWAHVLAQYTGKPDVVFGDTISGRNLVDPSISSTVVGCCATNVPMRVRFAGDSGEHSILQLLNQVRDQQRSRIPHEGVGVRSLIHECTDWSPEARFTSVVNHRPANDPAVKSISNQIDFKVSTITTENKPFMTWYDLAVISQENNGHVEMSLGYSTTGFHPETAQSLLEDLADTVQILLNAVSSQDEKLALLGTEVMPRSSSKLTKLQRVNSPKEQTLRKDKPTNGVFSDKPDDATLSVLDTIWFSIFTSNRAGVGTLASDELTPDLRYLPFYKVGGDLLDAAWFIALIQRRVKTSGRESNGDGILASHNQLTVDDVLRHPSVVEFAGLLKQKQVELN.

Residues 572 to 986 are condensation 1; sequence NIYPCTSIQE…LISQDDKNRI (415 aa). The tract at residues 1007–1404 is adenylation 1; that stretch reads ERIQKQPSAV…GRRDTQVKIR (398 aa). The 77-residue stretch at 1533 to 1609 folds into the Carrier 1 domain; it reads LPLTETEQKL…DLARTIDERN (77 aa). Serine 1570 bears the O-(pantetheine 4'-phosphoryl)serine mark. The condensation 2 stretch occupies residues 1657–2066; it reads EDVYPCTSLQ…QFLDETHHET (410 aa). The segment at 2102–2499 is adenylation 2; that stretch reads RDVAKEQPDS…YIGRMGSEVK (398 aa). The Carrier 2 domain occupies 2642–2718; it reads VPQTRIGKKL…DCARILEADQ (77 aa). Serine 2679 is modified (O-(pantetheine 4'-phosphoryl)serine). Positions 2764–3170 are condensation 3; the sequence is EDVYPCTPMQ…AASASSDDQT (407 aa). The adenylation 3 stretch occupies residues 3205–3609; the sequence is RSLETRPDSQ…GRGDSQIKIR (405 aa). In terms of domain architecture, Carrier 3 spans 3731–3804; the sequence is TESEYITRTL…KMAVVAQHQT (74 aa). Residue serine 3765 is modified to O-(pantetheine 4'-phosphoryl)serine. The tract at residues 3875 to 4278 is condensation 4; that stretch reads TFVLDAEGDL…SQDEKLALLG (404 aa). A compositionally biased stretch (polar residues) spans 4288 to 4300; that stretch reads KLTKLQRVNSPKE. The tract at residues 4288-4312 is disordered; it reads KLTKLQRVNSPKEQTLRKDKPTNGV.

It belongs to the NRP synthetase family.

Its pathway is secondary metabolite biosynthesis. Nonribosomal peptide synthetase; part of the gene cluster that mediates the biosynthesis of the lipopeptide fusaristatin A. Fusaristatin A consists of a polyketide chain linked to three amino acid residues glutamine (Gln), dehydroalanine (dehydro-Ala), and beta-aminoisobutyric acid. The biosynthesis starts with formation of a linear polyketide chain by the highly reducing polyketide synthase PKS6. The gene cluster does not contain an acyl-CoA ligase or an acyl-transferase, and it is therefore predicted that the polyketide is transferred directly to the nonribosomal peptide synthetase NRPS7. Modules 1-3 from NRPS7 incorporate dehydro-Ala, Gln, and beta-aminoisobutyric acid in the compound, which is released by cyclization. The beta-aminoisobutyric acid units are most likely not freely available to the NRPS, but can be synthesized from thymine, which requires a dehydrogenase, a monooxygenase, and an aminotransferase. The fusaristatin A cluster contains a cytochrome P450 monooxygenase (FGSG_08207) and an aminotransferase (FGSG_17085), which theoretically can perform two of the enzymatic steps. The enzymes may however also be involved in biosynthesis of dehydroalanine or modification of the polyketide. The dehydro-Ala residue can be a result of cyclization, where serine is dehydrated. The last gene of the cluster encodes a protein with an A/B barrel domain found in variable enzymes, which hampers functional prediction. The sequence is that of Nonribosomal peptide synthetase 7 from Gibberella zeae (strain ATCC MYA-4620 / CBS 123657 / FGSC 9075 / NRRL 31084 / PH-1) (Wheat head blight fungus).